Here is a 379-residue protein sequence, read N- to C-terminus: Homoserine O-succinyltransferase (379 aa).

The AB hydrolase-1 domain maps to 51-360 (NAVLICHALS…DAPQGHDAFL (310 aa)). Ser-157 functions as the Nucleophile in the catalytic mechanism. Arg-227 lines the substrate pocket. Residues Asp-323 and His-356 contribute to the active site. Asp-357 provides a ligand contact to substrate.

This sequence belongs to the AB hydrolase superfamily. MetX family. Homodimer.

The protein resides in the cytoplasm. It carries out the reaction L-homoserine + succinyl-CoA = O-succinyl-L-homoserine + CoA. It participates in amino-acid biosynthesis; L-methionine biosynthesis via de novo pathway; O-succinyl-L-homoserine from L-homoserine: step 1/1. Transfers a succinyl group from succinyl-CoA to L-homoserine, forming succinyl-L-homoserine. The polypeptide is Homoserine O-succinyltransferase (Stutzerimonas stutzeri (strain A1501) (Pseudomonas stutzeri)).